We begin with the raw amino-acid sequence, 201 residues long: Calcium channel flower (201 aa).

The next 3 helical transmembrane spans lie at 37-57 (LGIV…LSII), 59-79 (LSVS…VVMA), and 103-120 (PMYF…PPIF).

It belongs to the calcium channel flower family. Homomultimer. Associates with the dally/ magu complex.

It localises to the cell membrane. Its subcellular location is the cytoplasmic vesicle. The protein localises to the secretory vesicle. It is found in the synaptic vesicle membrane. The protein resides in the presynaptic cell membrane. It localises to the endosome. With respect to regulation, channel activity is inhibited by La(3+), which reduces Ca(2+) influx and thus inhibits it's function in promoting activity-dependent bulk endocytosis (ADBE) in response to high stimuli. Its function is as follows. Transmembrane protein which mediates synaptic endocytosis, fitness-based cell culling, neuronal culling, morphogen gradient scaling, and calcium transport. Regulates synaptic endocytosis and hence couples exo- with endocytosis. Controls two major modes of synaptic vesicle (SV) endocytosis in the synaptic boutons of neuromuscular junctions (NMJs); Ca(2+) channel-independent Clathrin-mediated endocytosis (CME) in response to mild stimulation, and Ca(2+) channel-dependent activity-dependent bulk endocytosis (ADBE) in response to strong stimulation. Functions in ADBE and subsequent SV reformation from bulk endosomes by initiating Ca(2+) channel-dependent phosphatidylinositol 4,5-bisphosphate (PtdIns(4,5)P2) compartmentalization in synaptic boutons. There it acts at the periactive zone to provide the low Ca(2+) levels required to initiate Calcineurin activation and upregulate PtdIns(4,5)P2. Conversely PtdIns(4,5)P2 enhances fwe Ca(2+) channel-activity, establishing a positive feedback loop that induces PtdIns(4,5)P2 microdomain at the periactive zone. These microdomains trigger bulk membrane invagination (i.e. ADBE) by triggering actin polymerization while also promoting localization of fwe to bulk endosomes, thereby removing the ADBE trigger to reduce endocytosis and prevent excess membrane uptake. PtdIns(4,5)P2 then promotes SV reformation from the bulk endosomes, to coordinate ADBE and subsequent SV reformation. Different combinations of the flower isoforms at the cell membrane are also required for the identification and elimination of suboptimal or supernumerary cells during development, regeneration, and adulthood. Required for the recognition and elimination of unfit cells in the developing wing during cell competition. In the developing pupal retina, mediates the elimination of unwanted postmitotic neurons, including supernumerary photoreceptor neurons that form at the periphery of the retina and are contained within incomplete ommatidia units. Also required for efficient elimination and replacement of old neurons by newly generated neurons during regeneration in the adult brain following mechanical injury. Downstream of the flower fitness fingerprints, cells identified as unwanted or unfit are eliminated via apoptosis through the expression of ahuizotl (azot). However, the cells marked for elimination by the flower isoforms only undergo apoptosis if additional thresholds are met; (1) their neighboring fit/healthy cells express different levels of the fwe isoforms, and (2) the levels of the protective signal SPARC expressed by the loser or unwanted cells are unable to inhibit caspase activation. These additional thresholds for flower-mediated apoptosis, allows useful cells to recover from transient and limited stress before they are unnecessarily eliminated. Functions with dally and magu in a mechanism of scaling, which utilises apoptosis to ensure that the dpp morphogen gradient, which mediates organ growth, remains proportional to the size of the growing wing. In this mechanism, fwe represses dally- and Magu-dependent activity in expanding the gradient, and dally/Magu inhibits fwe-dependent apoptosis to keep cell death rate low. When the levels of these different proteins are optimally regulated the gradient correctly scales with organ growth but when this fails, fwe-mediated apoptosis is activated to trim the developing tissue to match the correct size of the gradient. The polypeptide is Calcium channel flower (Drosophila willistoni (Fruit fly)).